We begin with the raw amino-acid sequence, 643 residues long: DNA gyrase subunit B (643 aa).

One can recognise a Toprim domain in the interval 428-542 (SEIFLVEGDS…AGYVYIAQPP (115 aa)). Glu434, Asp507, and Asp509 together coordinate Mg(2+).

Belongs to the type II topoisomerase GyrB family. Heterotetramer, composed of two GyrA and two GyrB chains. In the heterotetramer, GyrA contains the active site tyrosine that forms a transient covalent intermediate with DNA, while GyrB binds cofactors and catalyzes ATP hydrolysis. Mg(2+) serves as cofactor. The cofactor is Mn(2+). Requires Ca(2+) as cofactor.

Its subcellular location is the cytoplasm. The enzyme catalyses ATP-dependent breakage, passage and rejoining of double-stranded DNA.. Functionally, a type II topoisomerase that negatively supercoils closed circular double-stranded (ds) DNA in an ATP-dependent manner to modulate DNA topology and maintain chromosomes in an underwound state. Negative supercoiling favors strand separation, and DNA replication, transcription, recombination and repair, all of which involve strand separation. Also able to catalyze the interconversion of other topological isomers of dsDNA rings, including catenanes and knotted rings. Type II topoisomerases break and join 2 DNA strands simultaneously in an ATP-dependent manner. This chain is DNA gyrase subunit B, found in Staphylococcus epidermidis (strain ATCC 35984 / DSM 28319 / BCRC 17069 / CCUG 31568 / BM 3577 / RP62A).